A 393-amino-acid polypeptide reads, in one-letter code: NAD(P)H-quinone oxidoreductase subunit H, chloroplastic (393 aa).

This sequence belongs to the complex I 49 kDa subunit family. As to quaternary structure, NDH is composed of at least 16 different subunits, 5 of which are encoded in the nucleus.

The protein resides in the plastid. It is found in the chloroplast thylakoid membrane. The enzyme catalyses a plastoquinone + NADH + (n+1) H(+)(in) = a plastoquinol + NAD(+) + n H(+)(out). The catalysed reaction is a plastoquinone + NADPH + (n+1) H(+)(in) = a plastoquinol + NADP(+) + n H(+)(out). Functionally, NDH shuttles electrons from NAD(P)H:plastoquinone, via FMN and iron-sulfur (Fe-S) centers, to quinones in the photosynthetic chain and possibly in a chloroplast respiratory chain. The immediate electron acceptor for the enzyme in this species is believed to be plastoquinone. Couples the redox reaction to proton translocation, and thus conserves the redox energy in a proton gradient. This is NAD(P)H-quinone oxidoreductase subunit H, chloroplastic from Jasminum nudiflorum (Winter jasmine).